The primary structure comprises 365 residues: MREVNEMRALHDDLQVRVAGLRGYLDLEEKRGRLEEVQRELEDPTIWNNAEKAQELGRERSALEAVITPMDKLTASLADGGEMLELALSEQDAELLAAVDADLDTALSLVEKLEFQRMFSGAQDAANCFVDIQAGAGGTEAQDWAEMILRMYLHWAESHGFAAELVEVSEGEVAGIKSASIHVRGDHAFGWLRTETGVHRLVRKSPFDSGNRRHTSFASVFVYPEIDDSFEVDINPADLKVDTYRASGAGGQHVNKTDSAIRITHVPSGIVVACQTDRSQHKNRAEAMRMLRSKLYEMEMQKRAVEKQALEDSKSDIGWGHQIRSYVLDQSRIKDLRTGVEVGDTQKVLDGALDMFIEAALKAGL.

Q252 is modified (N5-methylglutamine).

It belongs to the prokaryotic/mitochondrial release factor family. Post-translationally, methylated by PrmC. Methylation increases the termination efficiency of RF2.

The protein localises to the cytoplasm. Functionally, peptide chain release factor 2 directs the termination of translation in response to the peptide chain termination codons UGA and UAA. This is Peptide chain release factor 2 from Acidithiobacillus ferrooxidans (strain ATCC 23270 / DSM 14882 / CIP 104768 / NCIMB 8455) (Ferrobacillus ferrooxidans (strain ATCC 23270)).